Consider the following 323-residue polypeptide: Aspartate carbamoyltransferase catalytic subunit (323 aa).

The carbamoyl phosphate site is built by R65 and T66. K93 is a binding site for L-aspartate. Carbamoyl phosphate is bound by residues R115, H149, and Q152. 2 residues coordinate L-aspartate: R182 and R237. Carbamoyl phosphate-binding residues include G278 and P279.

It belongs to the aspartate/ornithine carbamoyltransferase superfamily. ATCase family. In terms of assembly, heterododecamer (2C3:3R2) of six catalytic PyrB chains organized as two trimers (C3), and six regulatory PyrI chains organized as three dimers (R2).

The catalysed reaction is carbamoyl phosphate + L-aspartate = N-carbamoyl-L-aspartate + phosphate + H(+). It functions in the pathway pyrimidine metabolism; UMP biosynthesis via de novo pathway; (S)-dihydroorotate from bicarbonate: step 2/3. Functionally, catalyzes the condensation of carbamoyl phosphate and aspartate to form carbamoyl aspartate and inorganic phosphate, the committed step in the de novo pyrimidine nucleotide biosynthesis pathway. In Aromatoleum aromaticum (strain DSM 19018 / LMG 30748 / EbN1) (Azoarcus sp. (strain EbN1)), this protein is Aspartate carbamoyltransferase catalytic subunit.